The following is a 511-amino-acid chain: ATP synthase subunit alpha (511 aa).

169-176 contacts ATP; that stretch reads GDRQTGKT.

The protein belongs to the ATPase alpha/beta chains family. In terms of assembly, F-type ATPases have 2 components, CF(1) - the catalytic core - and CF(0) - the membrane proton channel. CF(1) has five subunits: alpha(3), beta(3), gamma(1), delta(1), epsilon(1). CF(0) has three main subunits: a(1), b(2) and c(9-12). The alpha and beta chains form an alternating ring which encloses part of the gamma chain. CF(1) is attached to CF(0) by a central stalk formed by the gamma and epsilon chains, while a peripheral stalk is formed by the delta and b chains.

It localises to the cell inner membrane. It carries out the reaction ATP + H2O + 4 H(+)(in) = ADP + phosphate + 5 H(+)(out). Its function is as follows. Produces ATP from ADP in the presence of a proton gradient across the membrane. The alpha chain is a regulatory subunit. The sequence is that of ATP synthase subunit alpha from Bartonella tribocorum (strain CIP 105476 / IBS 506).